A 130-amino-acid polypeptide reads, in one-letter code: Small ribosomal subunit protein uS11 (130 aa).

It belongs to the universal ribosomal protein uS11 family. Part of the 30S ribosomal subunit. Interacts with proteins S7 and S18. Binds to IF-3.

In terms of biological role, located on the platform of the 30S subunit, it bridges several disparate RNA helices of the 16S rRNA. Forms part of the Shine-Dalgarno cleft in the 70S ribosome. In Campylobacter jejuni subsp. jejuni serotype O:6 (strain 81116 / NCTC 11828), this protein is Small ribosomal subunit protein uS11.